Reading from the N-terminus, the 440-residue chain is Probable exopolygalacturonase C (440 aa).

An N-terminal signal peptide occupies residues 1 to 19 (MSVFKASFLFLLSSSLVHG). Residues asparagine 82 and asparagine 99 are each glycosylated (N-linked (GlcNAc...) asparagine). PbH1 repeat units lie at residues 215–236 (GTNIQITDSIMYNGDDAIAVGA), 238–259 (SHDTLFTRNTIGYQTHGMSIGS), and 265–288 (TDFANISNIRFDDVTVVDGLYAAR). Catalysis depends on aspartate 229, which acts as the Proton donor. Residue histidine 253 is part of the active site. 4 N-linked (GlcNAc...) asparagine glycosylation sites follow: asparagine 269, asparagine 301, asparagine 311, and asparagine 334. Cysteine 387 and cysteine 393 are joined by a disulfide. N-linked (GlcNAc...) asparagine glycosylation is found at asparagine 417 and asparagine 432.

This sequence belongs to the glycosyl hydrolase 28 family.

Its subcellular location is the secreted. It carries out the reaction [(1-&gt;4)-alpha-D-galacturonosyl](n) + H2O = alpha-D-galacturonate + [(1-&gt;4)-alpha-D-galacturonosyl](n-1). Specific in hydrolyzing the terminal glycosidic bond of polygalacturonic acid and oligogalacturonates. In Aspergillus niger (strain ATCC MYA-4892 / CBS 513.88 / FGSC A1513), this protein is Probable exopolygalacturonase C (pgxC).